A 766-amino-acid chain; its full sequence is Phospholipid phosphatase-related protein type 4 (766 aa).

At Ser-37 the chain carries Phosphoserine. 4 consecutive transmembrane segments (helical) span residues 68 to 88 (LPCFYFVELPILASSVVSLYF), 120 to 140 (AIPFLMLLSLAFAGPAITIMV), 179 to 199 (FVGVHVVGLCSTALITDIIQL), and 248 to 268 (SFPSQHATLAAFAAVYVSMYF). A glycan (N-linked (GlcNAc...) asparagine) is linked at Asn-269. A run of 2 helical transmembrane segments spans residues 277-297 (KLLKPLLVFTFIICGIICGLT) and 309-329 (VYCGFLIGGGIALYLGLYAVG). Phosphoserine is present on Ser-347. N-linked (GlcNAc...) asparagine glycosylation is present at Asn-363. Ser-386 is subject to Phosphoserine. Asn-433 carries an N-linked (GlcNAc...) asparagine glycan. Position 439 is a phosphoserine (Ser-439). Disordered regions lie at residues 454 to 503 (SKNE…GNQY) and 510 to 529 (TVPGCNNSMPAGPRVSIQSR). Asn-456 is a glycosylation site (N-linked (GlcNAc...) asparagine). Phosphoserine occurs at positions 462 and 474. N-linked (GlcNAc...) asparagine glycans are attached at residues Asn-515 and Asn-545. At Ser-608 the chain carries Phosphoserine. 3 disordered regions span residues 634-654 (PIIQIPSSTEGEGSGSWKWKA), 672-705 (DSESCESLKDSFGSGDRKRKHIDSNEHHHHGITT), and 741-766 (PERSNSPENTRNIFYKGTSPTRPYKD). Basic residues predominate over residues 688 to 702 (RKRKHIDSNEHHHHG). Over residues 743–752 (RSNSPENTRN) the composition is skewed to polar residues.

It belongs to the PA-phosphatase related phosphoesterase family. In terms of processing, O-glycosylated. Probably at Ser-347. Specifically expressed in neurons (at protein level).

It localises to the postsynaptic density membrane. Functionally, postsynaptic density membrane protein that indirectly regulates glutamatergic synaptic transmission through lysophosphatidic acid (LPA)-mediated signaling pathways. Binds lysophosphatidic acid (LPA) and mediates its internalization into cells. Could act as receptor or a transporter of this lipid at the post-synaptic membrane. Modulates lysophosphatidic acid (LPA) activity in neuron axonal outgrowth during development by attenuating phospholipid-induced axon collapse. This Rattus norvegicus (Rat) protein is Phospholipid phosphatase-related protein type 4.